Here is a 223-residue protein sequence, read N- to C-terminus: Sporulation-specific protein 19 (223 aa).

Residues 1–20 (MKKQILIVAAQSILCSTVFG) form the signal peptide. The GPI-anchor amidated asparagine moiety is linked to residue Asn198. The propeptide at 199-223 (ASNFLTPTTVALAVLLTILLFIQAY) is removed in mature form.

The GPI-anchor is attached to the protein in the endoplasmic reticulum and serves to target the protein to the cell surface. There, the glucosamine-inositol phospholipid moiety is cleaved off and the GPI-modified mannoprotein is covalently attached via its lipidless GPI glycan remnant to the 1,6-beta-glucan of the outer cell wall layer.

The protein resides in the secreted. It is found in the cell wall. The protein localises to the membrane. Involved in sporulation. Essential for completion of the nuclear division. In Saccharomyces cerevisiae (strain ATCC 204508 / S288c) (Baker's yeast), this protein is Sporulation-specific protein 19 (SPO19).